The following is a 305-amino-acid chain: Ornithine carbamoyltransferase (305 aa).

Residues 52–55 (STRT), Q79, R103, and 130–133 (HPCQ) contribute to the carbamoyl phosphate site. Residues N161, D222, and 226-227 (SM) each bind L-ornithine. Carbamoyl phosphate contacts are provided by residues 262–263 (CL) and R290.

Belongs to the aspartate/ornithine carbamoyltransferase superfamily. OTCase family.

It is found in the cytoplasm. It catalyses the reaction carbamoyl phosphate + L-ornithine = L-citrulline + phosphate + H(+). It functions in the pathway amino-acid biosynthesis; L-arginine biosynthesis; L-arginine from L-ornithine and carbamoyl phosphate: step 1/3. Its function is as follows. Reversibly catalyzes the transfer of the carbamoyl group from carbamoyl phosphate (CP) to the N(epsilon) atom of ornithine (ORN) to produce L-citrulline. This Pelobacter propionicus (strain DSM 2379 / NBRC 103807 / OttBd1) protein is Ornithine carbamoyltransferase.